A 364-amino-acid polypeptide reads, in one-letter code: Protein leg1a (364 aa).

A signal peptide spans 1–22; it reads MSEMGFLRSVAAVLLLAVFSHA. The N-linked (GlcNAc...) asparagine glycan is linked to Asn70.

It belongs to the LEG1 family. As to expression, detected in all tissues tested, with the highest levels in serum (at protein level). At mRNA level, only expressed in liver.

It localises to the secreted. Its function is as follows. Important for early development of liver, exocrine pancreas and intestine, probably through cell cycle regulation. In liver, its function is partially redundant with leg1b function. This is Protein leg1a from Danio rerio (Zebrafish).